The chain runs to 235 residues: Auracyanin-B (235 aa).

The span at 1-21 shows a compositional bias: low complexity; the sequence is MSWRGSGRSNFRSRSSSNGGS. 2 disordered regions span residues 1–27 and 64–107; these read MSWRGSGRSNFRSRSSSNGGSTFSGGS and ATPR…NVVN. Positions 1 to 56 are cleaved as a signal peptide; it reads MSWRGSGRSNFRSRSSSNGGSTFSGGSAGGPPLIVMMGLAFGAGLIMLIVMIASNA. A propeptide spanning residues 57–80 is cleaved from the precursor; it reads TAGGFVAATPRPTATPRPTAAPAP. The span at 69–86 shows a compositional bias: pro residues; sequence TATPRPTAAPAPTQPPAA. Residues 87 to 100 show a composition bias toward low complexity; sequence QPTTAPATQAANAP. In terms of domain architecture, Plastocyanin-like spans 111–235; the sequence is AQTVEVRAAP…GMKGTLTVTP (125 aa). Residues His-152, Cys-217, His-222, and Met-227 each coordinate Cu cation.

The protein belongs to the multicopper oxidase family. The cofactor is Cu cation. Post-translationally, glycosylated.

Its subcellular location is the cell membrane. Functionally, probably a soluble electron acceptor for the integral membrane protein electron transfer alternative complex III (ACIII). The protein is Auracyanin-B of Chloroflexus aurantiacus (strain ATCC 29366 / DSM 635 / J-10-fl).